We begin with the raw amino-acid sequence, 290 residues long: Nucleotide-binding protein Aave_3603 (290 aa).

Residue 13-20 (GMSGSGKS) participates in ATP binding. 62–65 (DVRS) is a GTP binding site.

Belongs to the RapZ-like family.

In terms of biological role, displays ATPase and GTPase activities. The sequence is that of Nucleotide-binding protein Aave_3603 from Paracidovorax citrulli (strain AAC00-1) (Acidovorax citrulli).